The following is a 428-amino-acid chain: L-gulono-1,4-lactone dehydrogenase (428 aa).

The 168-residue stretch at 12–179 folds into the FAD-binding PCMH-type domain; it reads QVCAPSAIVR…SQVTLQTVPL (168 aa).

It belongs to the oxygen-dependent FAD-linked oxidoreductase family. A divalent metal cation serves as cofactor.

The catalysed reaction is L-gulono-1,4-lactone + 2 Fe(III)-[cytochrome c] = L-ascorbate + 2 Fe(II)-[cytochrome c] + 3 H(+). It functions in the pathway cofactor biosynthesis; L-ascorbate biosynthesis. Oxidizes L-gulono-1,4-lactone to L-xylo-hexulonolactone which spontaneously isomerizes to L-ascorbate. The protein is L-gulono-1,4-lactone dehydrogenase of Mycobacterium tuberculosis (strain CDC 1551 / Oshkosh).